Consider the following 263-residue polypeptide: Lysine 5,6-aminomutase beta subunit (263 aa).

A B12-binding domain is found at 120–259; it reads EVVMVGASTG…TFILKEMVQR (140 aa). Residues 130 to 136 and histidine 133 contribute to the adenosylcob(III)alamin site; that span reads TDAHTVG. Lysine 144 bears the N6-(pyridoxal phosphate)lysine mark. Adenosylcob(III)alamin-binding positions include 185–192, 219–223, and 239–244; these read LVSQTVTQ, IAGGA, and FGPGKY.

It belongs to the KamE family. As to quaternary structure, heterotetramer of 2 alpha and 2 beta subunits. Adenosylcob(III)alamin is required as a cofactor. Requires pyridoxal 5'-phosphate as cofactor.

The catalysed reaction is (3S)-3,6-diaminohexanoate = (3S,5S)-3,5-diaminohexanoate. The enzyme catalyses D-lysine = (2R,5S)-2,5-diaminohexanoate. It functions in the pathway amino-acid degradation; L-lysine degradation via acetate pathway. Functionally, catalyzes the migration of the L-beta-lysine and D-lysine epsilon amino group to the delta carbon to produce 3,5-diaminohexanoate and 2,5-diaminohexanoate, respectively. The sequence is that of Lysine 5,6-aminomutase beta subunit from Fusobacterium nucleatum subsp. nucleatum (strain ATCC 25586 / DSM 15643 / BCRC 10681 / CIP 101130 / JCM 8532 / KCTC 2640 / LMG 13131 / VPI 4355).